The following is a 221-amino-acid chain: Transmembrane protein 225B (221 aa).

Transmembrane regions follow at residues 14 to 34 (WAIVPALTSLGYLIILVVSIF), 77 to 97 (VFLLSAVFLAFVTTFIMMPFA), 109 to 129 (FVLACISFFTGACAFLALVLH), and 147 to 167 (VLWPYYVLGFGIFLFIVAGTI).

Its subcellular location is the membrane. This Homo sapiens (Human) protein is Transmembrane protein 225B.